The following is a 149-amino-acid chain: Hydroalkoxylation enzyme phnH (149 aa).

The signal sequence occupies residues 1–18 (MKFTYLVSLAAFAVTALG). 2 N-linked (GlcNAc...) asparagine glycosylation sites follow: Asn33 and Asn127.

In terms of assembly, homotetramer.

It carries out the reaction 2,4,7,9-tetrahydroxy-6-methyl-8-(2-methylbut-3-en-2-yl)-1-oxo-1H-phenalen-3-ol = (2'R)-atrovenetin. It participates in secondary metabolite biosynthesis. Functionally, hydroalkoxylation enzyme; part of the gene cluster that mediates the biosynthesis of phenalenones such as herqueinone, compounds that have been reported to treat tumors, bacterial infections and/or mycoses, and rheumatic diseases. The non-reducing polyketide synthase phnA synthesizes the heptaketide backbone and cyclizes it into the angular, hemiketal-containing naphtho-gamma-pyrone prephenalenone. The product template (PT) domain of phnA catalyzes only the C4-C9 aldol condensation, which is unprecedented among known PT domains. The transformation of prephenalenone to phenalenones requires an FAD-dependent monooxygenase phnB, which catalyzes the C2 aromatic hydroxylation of prephenalenone and ring opening of the gamma-pyrone ring simultaneously. Subsequent intramolecular deprotonation of C3 phenolic oxygen accelerates phenalenone ring closure to yield the tricyclic phenalenone core with a C2 hydroxylation. The prenyltransferase phnF further catalyzes reverse C-prenylation of phenalenone by direct electrophilic substitution at C6, or possibly via first a forward O-prenylation of a neighboring phenol in phenalenone, followed by a Claisen rearrangement. The hydroalkoxylation enzyme phnH catalyzes the 5-exo-trig cyclization via acid catalysis after the spontaneous deprotonation of 7-OH, which leads to the formation of the dihydrobenzofuran atrovenetin. Atrovenetin is further converted to deoxyherqueinone by the O-methyltransferase phnC which can methylate C2-OH to stabilize the northern portion of the phenalenone core. Finally, the oxidoreductase phnG converts deoxyherqueinone to herqueinone via C6 hydroxylation. The protein is Hydroalkoxylation enzyme phnH of Penicillium herquei.